We begin with the raw amino-acid sequence, 103 residues long: Large ribosomal subunit protein bL21 (103 aa).

This sequence belongs to the bacterial ribosomal protein bL21 family. In terms of assembly, part of the 50S ribosomal subunit. Contacts protein L20.

Its function is as follows. This protein binds to 23S rRNA in the presence of protein L20. This chain is Large ribosomal subunit protein bL21, found in Glaesserella parasuis serovar 5 (strain SH0165) (Haemophilus parasuis).